The following is a 62-amino-acid chain: Ferredoxin-1 (62 aa).

2 4Fe-4S ferredoxin-type domains span residues 2 to 28 (ALYI…SAGS) and 29 to 62 (EIYV…IVQG). Residues C9, C12, C15, C19, C38, C41, C50, and C54 each contribute to the [4Fe-4S] cluster site.

The cofactor is [4Fe-4S] cluster.

Its function is as follows. Ferredoxins are iron-sulfur proteins that transfer electrons in a wide variety of metabolic reactions. The sequence is that of Ferredoxin-1 from Chlorobaculum tepidum (strain ATCC 49652 / DSM 12025 / NBRC 103806 / TLS) (Chlorobium tepidum).